Reading from the N-terminus, the 616-residue chain is Dihydroxy-acid dehydratase (616 aa).

Asp81 contacts Mg(2+). A [2Fe-2S] cluster-binding site is contributed by Cys122. Residues Asp123 and Lys124 each contribute to the Mg(2+) site. An N6-carboxylysine modification is found at Lys124. Cys195 is a [2Fe-2S] cluster binding site. Residue Glu491 coordinates Mg(2+). Ser517 functions as the Proton acceptor in the catalytic mechanism.

This sequence belongs to the IlvD/Edd family. Homodimer. Requires [2Fe-2S] cluster as cofactor. It depends on Mg(2+) as a cofactor.

It carries out the reaction (2R)-2,3-dihydroxy-3-methylbutanoate = 3-methyl-2-oxobutanoate + H2O. The enzyme catalyses (2R,3R)-2,3-dihydroxy-3-methylpentanoate = (S)-3-methyl-2-oxopentanoate + H2O. It functions in the pathway amino-acid biosynthesis; L-isoleucine biosynthesis; L-isoleucine from 2-oxobutanoate: step 3/4. It participates in amino-acid biosynthesis; L-valine biosynthesis; L-valine from pyruvate: step 3/4. Its function is as follows. Functions in the biosynthesis of branched-chain amino acids. Catalyzes the dehydration of (2R,3R)-2,3-dihydroxy-3-methylpentanoate (2,3-dihydroxy-3-methylvalerate) into 2-oxo-3-methylpentanoate (2-oxo-3-methylvalerate) and of (2R)-2,3-dihydroxy-3-methylbutanoate (2,3-dihydroxyisovalerate) into 2-oxo-3-methylbutanoate (2-oxoisovalerate), the penultimate precursor to L-isoleucine and L-valine, respectively. This is Dihydroxy-acid dehydratase from Salmonella typhi.